A 477-amino-acid chain; its full sequence is Glycogen synthase (477 aa).

Lys15 contacts ADP-alpha-D-glucose.

It belongs to the glycosyltransferase 1 family. Bacterial/plant glycogen synthase subfamily.

The catalysed reaction is [(1-&gt;4)-alpha-D-glucosyl](n) + ADP-alpha-D-glucose = [(1-&gt;4)-alpha-D-glucosyl](n+1) + ADP + H(+). It functions in the pathway glycan biosynthesis; glycogen biosynthesis. Synthesizes alpha-1,4-glucan chains using ADP-glucose. This Clostridium acetobutylicum (strain ATCC 824 / DSM 792 / JCM 1419 / IAM 19013 / LMG 5710 / NBRC 13948 / NRRL B-527 / VKM B-1787 / 2291 / W) protein is Glycogen synthase.